Reading from the N-terminus, the 172-residue chain is 3-hydroxydecanoyl-[acyl-carrier-protein] dehydratase (172 aa).

The active site involves histidine 71.

The protein belongs to the thioester dehydratase family. FabA subfamily. In terms of assembly, homodimer.

It localises to the cytoplasm. The enzyme catalyses a (3R)-hydroxyacyl-[ACP] = a (2E)-enoyl-[ACP] + H2O. The catalysed reaction is (3R)-hydroxydecanoyl-[ACP] = (2E)-decenoyl-[ACP] + H2O. It catalyses the reaction (2E)-decenoyl-[ACP] = (3Z)-decenoyl-[ACP]. It participates in lipid metabolism; fatty acid biosynthesis. In terms of biological role, necessary for the introduction of cis unsaturation into fatty acids. Catalyzes the dehydration of (3R)-3-hydroxydecanoyl-ACP to E-(2)-decenoyl-ACP and then its isomerization to Z-(3)-decenoyl-ACP. Can catalyze the dehydratase reaction for beta-hydroxyacyl-ACPs with saturated chain lengths up to 16:0, being most active on intermediate chain length. The chain is 3-hydroxydecanoyl-[acyl-carrier-protein] dehydratase from Escherichia coli (strain 55989 / EAEC).